Here is a 167-residue protein sequence, read N- to C-terminus: S-ribosylhomocysteine lyase (167 aa).

His-54, His-58, and Cys-128 together coordinate Fe cation.

This sequence belongs to the LuxS family. In terms of assembly, homodimer. The cofactor is Fe cation.

The enzyme catalyses S-(5-deoxy-D-ribos-5-yl)-L-homocysteine = (S)-4,5-dihydroxypentane-2,3-dione + L-homocysteine. Involved in the synthesis of autoinducer 2 (AI-2) which is secreted by bacteria and is used to communicate both the cell density and the metabolic potential of the environment. The regulation of gene expression in response to changes in cell density is called quorum sensing. Catalyzes the transformation of S-ribosylhomocysteine (RHC) to homocysteine (HC) and 4,5-dihydroxy-2,3-pentadione (DPD). The chain is S-ribosylhomocysteine lyase from Sulfurimonas denitrificans (strain ATCC 33889 / DSM 1251) (Thiomicrospira denitrificans (strain ATCC 33889 / DSM 1251)).